The primary structure comprises 451 residues: MEKSNGLRVILFPLPLQGCINPMIQLAKILHSRGFSITVIHTCFNAPKASSHPLFTFIQIQDGLSETETRTRDVKLLITLLNQNCESPVRECLRKLLQSAKEEKQRISCLINDSGWIFTQHLAKSLNLMRLAFNTYKISFFRSHFVLPQLRREMFLPLQDSEQDDPVEKFPPLRKKDLLRILEADSVQGDSYSDMILEKTKASSGLIFMSCEELDQDSLSQSREDFKVPIFAIGPSHSHFPASSSSLFTPDETCIPWLDRQEDKSVIYVSIGSLVTINETELMEIAWGLSNSDQPFLWVVRVGSVNGTEWIEAIPEYFIKRLNEKGKIVKWAPQQEVLKHRAIGGFLTHNGWNSTVESVCEGVPMICLPFRWDQLLNARFVSDVWMVGIHLEGRIERDEIERAIRRLLLETEGEAIRERIQLLKEKVGRSVKQNGSAYQSLQNLINYISSF.

UDP-alpha-D-glucose-binding positions include S273, 332–334, 349–357, and 371–374; these read APQ, HNGWNSTVE, and RWDQ.

This sequence belongs to the UDP-glycosyltransferase family.

This Arabidopsis thaliana (Mouse-ear cress) protein is UDP-glycosyltransferase 76C4 (UGT76C4).